The chain runs to 250 residues: 2,3-bisphosphoglycerate-dependent phosphoglycerate mutase (250 aa).

Substrate-binding positions include 8 to 15 (RHGESEWN), 21 to 22 (TG), Arg60, 87 to 90 (ERHY), Lys98, 114 to 115 (RR), and 183 to 184 (GN). His9 acts as the Tele-phosphohistidine intermediate in catalysis. Residue Glu87 is the Proton donor/acceptor of the active site.

This sequence belongs to the phosphoglycerate mutase family. BPG-dependent PGAM subfamily.

It catalyses the reaction (2R)-2-phosphoglycerate = (2R)-3-phosphoglycerate. Its pathway is carbohydrate degradation; glycolysis; pyruvate from D-glyceraldehyde 3-phosphate: step 3/5. In terms of biological role, catalyzes the interconversion of 2-phosphoglycerate and 3-phosphoglycerate. The polypeptide is 2,3-bisphosphoglycerate-dependent phosphoglycerate mutase (Borrelia duttonii (strain Ly)).